The sequence spans 432 residues: Adenylosuccinate synthetase (432 aa).

Residues 16–22 and 44–46 contribute to the GTP site; these read GDEGKGK and GHM. D17 (proton acceptor) is an active-site residue. Residues D17 and G44 each coordinate Mg(2+). Residues 17–20, 42–45, T132, R146, Q226, T241, and R305 contribute to the IMP site; these read DEGK and NAGH. H45 serves as the catalytic Proton donor. Position 301-307 (301-307) interacts with substrate; the sequence is LNTGRPR. Residues R307, 333-335, and 415-417 contribute to the GTP site; these read LFD and SVG.

The protein belongs to the adenylosuccinate synthetase family. As to quaternary structure, homodimer. Requires Mg(2+) as cofactor.

Its subcellular location is the cytoplasm. It carries out the reaction IMP + L-aspartate + GTP = N(6)-(1,2-dicarboxyethyl)-AMP + GDP + phosphate + 2 H(+). The protein operates within purine metabolism; AMP biosynthesis via de novo pathway; AMP from IMP: step 1/2. Functionally, plays an important role in the de novo pathway of purine nucleotide biosynthesis. Catalyzes the first committed step in the biosynthesis of AMP from IMP. In Mycoplasma mycoides subsp. mycoides SC (strain CCUG 32753 / NCTC 10114 / PG1), this protein is Adenylosuccinate synthetase.